We begin with the raw amino-acid sequence, 425 residues long: Palmitoyltransferase ZDHHC23 (425 aa).

Over 1–81 (MKPVKKKKTE…RIPWLRGAKK (81 aa)) the chain is Cytoplasmic. A helical membrane pass occupies residues 82–99 (VNISIVPPLVLLPVFLHV). Over 100–102 (ASW) the chain is Lumenal. A helical membrane pass occupies residues 103-125 (HFLLGVVVLTSLPMLALWYYYLT). Residues 126-130 (HRRKE) are Cytoplasmic-facing. The helical transmembrane segment at 131 to 151 (QTLFFLSLGLFSLGYMYYVFL) threads the bilayer. Topologically, residues 152–159 (REVVPQGR) are lumenal. The chain crosses the membrane as a helical span at residues 160-180 (VGPTQLALLTCGLLLILLALY). The Cytoplasmic segment spans residues 181–292 (RAKKNPGYLS…NSCVGESNHQ (112 aa)). The region spanning 249 to 299 (DWCAKCQLVRPARAWHCRICGICVRRMDHHCVWINSCVGESNHQAFILALS) is the DHHC domain. The active-site S-palmitoyl cysteine intermediate is cysteine 279. A helical transmembrane segment spans residues 293 to 313 (AFILALSIFLLTSVYGISLTL). The Lumenal segment spans residues 314-343 (NTICRDRSLFTALFYCPGVYANYSSALSFT). The chain crosses the membrane as a helical span at residues 344–364 (CVWYSVIITAGMAYIFLIQLI). Over 365–425 (NISYNVTERE…TVHTPAEDIV (61 aa)) the chain is Cytoplasmic. The tract at residues 422-425 (EDIV) is interaction with NOS1.

Belongs to the DHHC palmitoyltransferase family. Interacts with NOS1. As to expression, expressed in the brain.

It is found in the golgi apparatus membrane. It localises to the golgi apparatus. The protein localises to the trans-Golgi network membrane. The catalysed reaction is L-cysteinyl-[protein] + hexadecanoyl-CoA = S-hexadecanoyl-L-cysteinyl-[protein] + CoA. In terms of biological role, palmitoyltransferase that could catalyze the addition of palmitate onto various protein substrates and be involved in a variety of cellular processes. Palmitoyltransferase that mediates palmitoylation of KCNMA1, regulating localization of KCNMA1 to the plasma membrane. May be involved in NOS1 regulation and targeting to the synaptic membrane. This is Palmitoyltransferase ZDHHC23 from Mus musculus (Mouse).